The primary structure comprises 240 residues: MVVLAVSIVNRGGKAIISRQFREMSRVRVESLLSSFPALVSEKSQNTTVESDNVRFVYQPLDELYIVLITNLQSNILQDIDTLHLLSQVVTSICSSLEEREILEYAFEIFTAFDEATSLGYRDNVSLTQIKTYLEMESHEEKIQEIVSRNKEIEATEERKRRIKQLELQKKEAARRAAQNLPSADAYESIGYQTVNTTFATSNVEDESAMESYHAAAKASSAPKAKGMQLGKKKNTSLLY.

Over residues 215 to 226 the composition is skewed to low complexity; the sequence is AAAKASSAPKAK. Positions 215–240 are disordered; the sequence is AAAKASSAPKAKGMQLGKKKNTSLLY. The segment covering 231–240 has biased composition (basic residues); the sequence is GKKKNTSLLY.

Belongs to the adaptor complexes medium subunit family. Delta-COP subfamily. In terms of assembly, oligomeric complex that consists of at least the alpha, beta, beta', gamma, delta, epsilon and zeta subunits.

The protein resides in the cytoplasm. The protein localises to the nucleus. Functionally, the coatomer is a cytosolic protein complex that binds to dilysine motifs and reversibly associates with Golgi non-clathrin-coated vesicles, which further mediate biosynthetic protein transport from the ER, via the Golgi up to the trans Golgi network. Coatomer complex is required for budding from Golgi membranes, and is essential for the retrograde Golgi-to-ER transport of dilysine-tagged proteins. This Schizosaccharomyces pombe (strain 972 / ATCC 24843) (Fission yeast) protein is Coatomer subunit delta (ret2).